Consider the following 185-residue polypeptide: Alpha-S1-casein (185 aa).

An N-terminal signal peptide occupies residues 1–15 (MRLLILTCLVAVALA). Phosphoserine is present on residues Ser31, Ser33, Ser41, Ser71, Ser85, Ser86, Ser88, Ser89, Ser90, and Ser91.

Belongs to the alpha-casein family. Heteromultimers of alpha-s1 casein and kappa-casein; disulfide-linked. In terms of processing, not glycosylated. Mammary gland specific. Secreted in milk.

The protein localises to the secreted. Its function is as follows. Important role in the capacity of milk to transport calcium phosphate. In terms of biological role, casoxin D acts as opioid antagonist and has vasorelaxing activity mediated by bradykinin B1 receptors. The sequence is that of Alpha-S1-casein (CSN1S1) from Homo sapiens (Human).